A 418-amino-acid polypeptide reads, in one-letter code: Serine protease inhibitor A3K (418 aa).

Residues 1 to 21 (MAFIVAMGMILMAGICPAVLC) form the signal peptide. Residues Asn39, Asn105, Asn185, and Asn270 are each glycosylated (N-linked (GlcNAc...) asparagine). The segment at 369–394 (GTEAAAATGVIGGIRKAILPAVHFNR) is RCL.

It belongs to the serpin family. In terms of tissue distribution, expressed in liver and secreted in plasma.

It is found in the secreted. Contrapsin inhibits trypsin-like proteases. This Mus musculus (Mouse) protein is Serine protease inhibitor A3K (Serpina3k).